The chain runs to 278 residues: MGERFIKMHGLGNDFVVLDHLESPRELSPQEARFWADRRRGVGCDQVVQLLPGVEGGDAQMRIYNPDGSRAEMCGNAMRCVGLYLHEQRGMAAALAVETLAGIMRPQVTSALAITVDMGRPQWAGRAIPLDQDGEMIDAPLEVGGQSYRMTALSMGNPHGVVRVADAEGFELAKVGPLVEHHALFPNRINFEVVQVLSRSRIRMRVWERGAGITPACGTGACAAAVACMRQGWVERDCTVVLDGGELQIVWLESDRVMMSGPATEVFRGELVGLPAGF.

Residues Asn-13, Gln-46, and Asn-65 each coordinate substrate. Residue Cys-74 is the Proton donor of the active site. Residues 75 to 76, Asn-157, Asn-190, and 208 to 209 each bind substrate; these read GN and ER. Cys-217 functions as the Proton acceptor in the catalytic mechanism. 218-219 provides a ligand contact to substrate; sequence GT.

This sequence belongs to the diaminopimelate epimerase family. Homodimer.

It is found in the cytoplasm. It catalyses the reaction (2S,6S)-2,6-diaminopimelate = meso-2,6-diaminopimelate. It functions in the pathway amino-acid biosynthesis; L-lysine biosynthesis via DAP pathway; DL-2,6-diaminopimelate from LL-2,6-diaminopimelate: step 1/1. Catalyzes the stereoinversion of LL-2,6-diaminopimelate (L,L-DAP) to meso-diaminopimelate (meso-DAP), a precursor of L-lysine and an essential component of the bacterial peptidoglycan. The protein is Diaminopimelate epimerase of Magnetococcus marinus (strain ATCC BAA-1437 / JCM 17883 / MC-1).